The primary structure comprises 101 residues: Integration host factor subunit alpha (101 aa).

The protein belongs to the bacterial histone-like protein family. As to quaternary structure, heterodimer of an alpha and a beta chain.

Its function is as follows. This protein is one of the two subunits of integration host factor, a specific DNA-binding protein that functions in genetic recombination as well as in transcriptional and translational control. The polypeptide is Integration host factor subunit alpha (Dinoroseobacter shibae (strain DSM 16493 / NCIMB 14021 / DFL 12)).